The chain runs to 134 residues: Small ribosomal subunit protein uS8c (134 aa).

Belongs to the universal ribosomal protein uS8 family. In terms of assembly, part of the 30S ribosomal subunit.

It localises to the plastid. The protein resides in the chloroplast. Its function is as follows. One of the primary rRNA binding proteins, it binds directly to 16S rRNA central domain where it helps coordinate assembly of the platform of the 30S subunit. The polypeptide is Small ribosomal subunit protein uS8c (rps8) (Eucalyptus globulus subsp. globulus (Tasmanian blue gum)).